A 414-amino-acid chain; its full sequence is Serine/threonine transporter SstT (414 aa).

9 helical membrane-spanning segments follow: residues 19 to 39 (IIVGLVLGVVTALISPDLEPV), 55 to 75 (FVKGLRAVAPILIFVLVIAAI), 89 to 109 (IVMLYIIGTFGASIVAVLASF), 148 to 168 (ALATSNFIGILAWAIALGIAL), 189 to 209 (IVHLVISLAPFGIFGLVAATL), 223 to 243 (LLLVLLGSMLFMALVVNPFIV), 297 to 317 (IPLGATINMAGAAITVTVLTL), 323 to 343 (LGIPVSIPTAILLSVVSAVCA), and 363 to 383 (LFGISGDVAAQVIAVGFVIGV).

The protein belongs to the dicarboxylate/amino acid:cation symporter (DAACS) (TC 2.A.23) family.

Its subcellular location is the cell inner membrane. It catalyses the reaction L-serine(in) + Na(+)(in) = L-serine(out) + Na(+)(out). The catalysed reaction is L-threonine(in) + Na(+)(in) = L-threonine(out) + Na(+)(out). Involved in the import of serine and threonine into the cell, with the concomitant import of sodium (symport system). This Actinobacillus succinogenes (strain ATCC 55618 / DSM 22257 / CCUG 43843 / 130Z) protein is Serine/threonine transporter SstT.